Reading from the N-terminus, the 306-residue chain is MFGFLGRRRDEREVIEIEPDGPVDCIADFTYNFYWQHRGEKLDPDERIPGTSHTFREVVEHLKDGGEVIVRGDAGHRLASSMGADLAYFGGGGGVMDAGVVTVEGDVDTRMGISMVSGTIYVKGAVRDPIGNIIEVRSDRRGYKKFMSVTDILMNGLRAEPVNVTLEPGRMVIDDGHVRDTLGARLDADVEIIHHGNVDLSTGILMRRGTVRVMGDAGKNTGALLSGGTVIIQGDCDDFSGIDMRDGYLIVDGDAGKFLGAQRRGGVILARRGKPVPPTSESDLTEDDRRVLMEAGLRPHLFRRFS.

To M.jannaschii MJ0658.

This is an uncharacterized protein from Methanothermobacter thermautotrophicus (strain ATCC 29096 / DSM 1053 / JCM 10044 / NBRC 100330 / Delta H) (Methanobacterium thermoautotrophicum).